A 148-amino-acid chain; its full sequence is Azurin (148 aa).

The signal sequence occupies residues 1–18 (MRNQLLFALAFIPTIAAA). A Plastocyanin-like domain is found at 19-148 (ASNCEVNVSA…MMRGTVKLVD (130 aa)). The cysteines at positions 22 and 45 are disulfide-linked. Positions 65, 131, 136, and 140 each coordinate Cu cation.

Its subcellular location is the periplasm. Its pathway is one-carbon metabolism; methylamine degradation. Probable electron acceptor for methylamine dehydrogenase. The polypeptide is Azurin (azu) (Methylobacillus flagellatus (strain ATCC 51484 / DSM 6875 / VKM B-1610 / KT)).